We begin with the raw amino-acid sequence, 472 residues long: Ribulose bisphosphate carboxylase/oxygenase activase, chloroplastic (472 aa).

A chloroplast-targeting transit peptide spans 1-58 (MATAVSTVGAATRAPLNLNGSSAGASVPTSGFLGSSLKKHTNVRFPSSSRTTSMTVKA). 163–170 (GGKGQGKS) contributes to the ATP binding site. The disordered stretch occupies residues 448 to 472 (GCTDPEAKNYDPTARSDDGSCTYNL). Positions 452–465 (PEAKNYDPTARSDD) are enriched in basic and acidic residues.

This sequence belongs to the RuBisCO activase family.

Its subcellular location is the plastid. The protein localises to the chloroplast stroma. Functionally, activation of RuBisCO (ribulose-1,5-bisphosphate carboxylase/oxygenase; EC 4.1.1.39) involves the ATP-dependent carboxylation of the epsilon-amino group of lysine leading to a carbamate structure. The protein is Ribulose bisphosphate carboxylase/oxygenase activase, chloroplastic of Spinacia oleracea (Spinach).